Consider the following 292-residue polypeptide: F-box protein SKIP28 (292 aa).

The F-box; degenerate domain occupies 21–79 (LIVLPYLHSLFELLSMIRVSRSLRDAIRDETALWTKLVIEPPLSSRLTDDILSEFSSKS).

Part of a SCF (ASK-cullin-F-box) protein ligase complex. Interacts with SKP1A/ASK1 and CUL1.

It participates in protein modification; protein ubiquitination. In terms of biological role, component of SCF(ASK-cullin-F-box) E3 ubiquitin ligase complexes, which may mediate the ubiquitination and subsequent proteasomal degradation of target proteins. Required during the endosperm development in embryos. The sequence is that of F-box protein SKIP28 (SKIP28) from Arabidopsis thaliana (Mouse-ear cress).